The sequence spans 355 residues: Peptide chain release factor 1 (355 aa).

Gln-231 is modified (N5-methylglutamine).

The protein belongs to the prokaryotic/mitochondrial release factor family. Methylated by PrmC. Methylation increases the termination efficiency of RF1.

It localises to the cytoplasm. Peptide chain release factor 1 directs the termination of translation in response to the peptide chain termination codons UAG and UAA. The sequence is that of Peptide chain release factor 1 from Nautilia profundicola (strain ATCC BAA-1463 / DSM 18972 / AmH).